The following is a 115-amino-acid chain: Large ribosomal subunit protein bL19 (115 aa).

This sequence belongs to the bacterial ribosomal protein bL19 family.

Functionally, this protein is located at the 30S-50S ribosomal subunit interface and may play a role in the structure and function of the aminoacyl-tRNA binding site. The chain is Large ribosomal subunit protein bL19 from Streptococcus mutans serotype c (strain ATCC 700610 / UA159).